The following is a 421-amino-acid chain: Histidine--tRNA ligase (421 aa).

This sequence belongs to the class-II aminoacyl-tRNA synthetase family. Homodimer.

Its subcellular location is the cytoplasm. The enzyme catalyses tRNA(His) + L-histidine + ATP = L-histidyl-tRNA(His) + AMP + diphosphate + H(+). This Nitrosomonas eutropha (strain DSM 101675 / C91 / Nm57) protein is Histidine--tRNA ligase.